Reading from the N-terminus, the 259-residue chain is Phosphatidylglycerol--prolipoprotein diacylglyceryl transferase (259 aa).

7 consecutive transmembrane segments (helical) span residues leucine 9–valine 29, aspartate 48–phenylalanine 68, isoleucine 83–isoleucine 103, aspartate 114–glycine 133, threonine 167–leucine 187, glycine 197–methionine 217, and leucine 227–isoleucine 247. Arginine 131 provides a ligand contact to a 1,2-diacyl-sn-glycero-3-phospho-(1'-sn-glycerol).

Belongs to the Lgt family.

It is found in the cell membrane. It carries out the reaction L-cysteinyl-[prolipoprotein] + a 1,2-diacyl-sn-glycero-3-phospho-(1'-sn-glycerol) = an S-1,2-diacyl-sn-glyceryl-L-cysteinyl-[prolipoprotein] + sn-glycerol 1-phosphate + H(+). Its pathway is protein modification; lipoprotein biosynthesis (diacylglyceryl transfer). Functionally, catalyzes the transfer of the diacylglyceryl group from phosphatidylglycerol to the sulfhydryl group of the N-terminal cysteine of a prolipoprotein, the first step in the formation of mature lipoproteins. This chain is Phosphatidylglycerol--prolipoprotein diacylglyceryl transferase, found in Streptococcus mutans serotype c (strain ATCC 700610 / UA159).